Consider the following 285-residue polypeptide: Elongation factor Ts (285 aa).

The tract at residues 84-87 is involved in Mg(2+) ion dislocation from EF-Tu; it reads TDFV.

It belongs to the EF-Ts family.

The protein localises to the cytoplasm. In terms of biological role, associates with the EF-Tu.GDP complex and induces the exchange of GDP to GTP. It remains bound to the aminoacyl-tRNA.EF-Tu.GTP complex up to the GTP hydrolysis stage on the ribosome. The chain is Elongation factor Ts from Bifidobacterium animalis subsp. lactis (strain AD011).